We begin with the raw amino-acid sequence, 345 residues long: Pectin lyase (345 aa).

The signal sequence occupies residues 1 to 24 (MKRFCLWFAVFSLLLVLLPGKAFG). Residue arginine 234 is part of the active site.

This sequence belongs to the polysaccharide lyase 1 family.

It localises to the secreted. It carries out the reaction Eliminative cleavage of (1-&gt;4)-alpha-D-galacturonan methyl ester to give oligosaccharides with 4-deoxy-6-O-methyl-alpha-D-galact-4-enuronosyl groups at their non-reducing ends.. Inhibited by Hg(2+) and Mn(2+). Not affected by EDTA in vitro. Catalyzes the depolymerization of pectins of methyl esterification degree from 13 to 75%, with an endo mode of action. Cannot degrade polygalacturonate. Also displays protopectinase activity, i.e. releases pectin from protopectin. The protein is Pectin lyase (pelB) of Bacillus subtilis.